The sequence spans 142 residues: Holo-[acyl-carrier-protein] synthase (142 aa).

Mg(2+) contacts are provided by D9 and E63.

This sequence belongs to the P-Pant transferase superfamily. AcpS family. Requires Mg(2+) as cofactor.

It localises to the cytoplasm. It carries out the reaction apo-[ACP] + CoA = holo-[ACP] + adenosine 3',5'-bisphosphate + H(+). In terms of biological role, transfers the 4'-phosphopantetheine moiety from coenzyme A to a Ser of acyl-carrier-protein. This is Holo-[acyl-carrier-protein] synthase from Burkholderia lata (strain ATCC 17760 / DSM 23089 / LMG 22485 / NCIMB 9086 / R18194 / 383).